Here is a 272-residue protein sequence, read N- to C-terminus: 1,4-dihydroxy-2-naphthoyl-CoA synthase (272 aa).

Substrate is bound by residues arginine 33, serine 72–glutamine 76, tyrosine 84, tyrosine 116–glycine 120, threonine 142, serine 148, tyrosine 245, and lysine 260. Glutamine 141–glycine 143 is a binding site for hydrogencarbonate.

Belongs to the enoyl-CoA hydratase/isomerase family. MenB subfamily. Hydrogencarbonate serves as cofactor.

The enzyme catalyses 2-succinylbenzoyl-CoA + H(+) = 1,4-dihydroxy-2-naphthoyl-CoA + H2O. It functions in the pathway quinol/quinone metabolism; 1,4-dihydroxy-2-naphthoate biosynthesis; 1,4-dihydroxy-2-naphthoate from chorismate: step 6/7. Its pathway is quinol/quinone metabolism; menaquinone biosynthesis. Its function is as follows. Converts o-succinylbenzoyl-CoA (OSB-CoA) to 1,4-dihydroxy-2-naphthoyl-CoA (DHNA-CoA). The chain is 1,4-dihydroxy-2-naphthoyl-CoA synthase from Staphylococcus epidermidis (strain ATCC 12228 / FDA PCI 1200).